Consider the following 571-residue polypeptide: Streptolysin O (571 aa).

The first 33 residues, 1 to 33 (MSNKKTFKKYSRVAGLLTAALIIGNLVTANAES), serve as a signal peptide directing secretion. Residues 30-108 (NAESNKQNTA…KKSEEDHTEE (79 aa)) are disordered. Positions 37 to 48 (NTASTETTTTNE) are enriched in low complexity. 2 stretches are compositionally biased toward basic and acidic residues: residues 50-68 (PKPE…KTDD) and 79-108 (APKE…HTEE). The next 4 membrane-spanning stretches (beta stranded) occupy residues 260–273 (KSQI…NSKI), 280–289 (IDFKSISKGE), 358–367 (SNDVEAAFSA), and 375–387 (KTNG…LENS). Residues 529 to 539 (ECTGLAWEWWR) carry the Conserved undecapeptide motif. The Cholesterol binding signature appears at 561–562 (TL).

The protein belongs to the cholesterol-dependent cytolysin family. In terms of assembly, homooligomeric pore complex of 35 to 50 subunits; when inserted in the host membrane.

The protein resides in the secreted. It localises to the host cell membrane. Its function is as follows. A cholesterol-dependent toxin that causes cytolysis by forming pores in cholesterol containing host membranes. After binding to target membranes, the protein undergoes a major conformation change, leading to its insertion in the host membrane and formation of an oligomeric pore complex. Cholesterol is required for binding to host membranes, membrane insertion and pore formation; cholesterol binding is mediated by a Thr-Leu pair in the C-terminus. Can be reversibly inactivated by oxidation. In Streptococcus pyogenes serotype M3 (strain ATCC BAA-595 / MGAS315), this protein is Streptolysin O (slo).